Consider the following 918-residue polypeptide: Rap guanine nucleotide exchange factor 3 (918 aa).

Ser79 is modified (phosphoserine). One can recognise a DEP domain in the interval 110 to 186 (ATYPTLIRDR…RDAQFYRFPG (77 aa)). The interaction with PDE3B stretch occupies residues 218–242 (TVALRKPPGQRTDEELDLIFEELLH). 3',5'-cyclic AMP-binding positions include 311–314 (GQLA) and 321–322 (RA). Residues 369-388 (TSQGAGPSRPPTPGRNRYTV) are disordered. One can recognise an N-terminal Ras-GEF domain in the interval 384-521 (NRYTVMSGTP…EQYPERRRHH (138 aa)). The interval 398–422 (ELLLEAMRPDSSAHDPTETFLSDFL) is interaction with PDE3B. 2 positions are modified to phosphoserine: Ser531 and Ser859. A Ras-GEF domain is found at 665 to 884 (SAKDLAGQLT…SRISTCSEQS (220 aa)).

As to quaternary structure, interacts with PDE3B and PIK3R6; form a signaling complex that regulates phosphatidylinositol 3-kinase gamma in angiogenesis.

Its subcellular location is the cytoplasm. It is found in the membrane. Guanine nucleotide exchange factor (GEF) for RAP1A and RAP2A small GTPases that is activated by binding cAMP. Through simultaneous binding of PDE3B to RAPGEF3 and PIK3R6 is assembled in a signaling complex in which it activates the PI3K gamma complex and which is involved in angiogenesis. Plays a role in the modulation of the cAMP-induced dynamic control of endothelial barrier function through a pathway that is independent on Rho-mediated signaling. Required for the actin rearrangement at cell-cell junctions, such as stress fibers and junctional actin. This is Rap guanine nucleotide exchange factor 3 (Rapgef3) from Mus musculus (Mouse).